A 367-amino-acid chain; its full sequence is Nociceptin receptor (367 aa).

The Extracellular portion of the chain corresponds to Met-1 to Leu-45. Asn-21, Asn-26, and Asn-36 each carry an N-linked (GlcNAc...) asparagine glycan. The chain crosses the membrane as a helical span at residues Gly-46 to Tyr-71. At Val-72–Asn-84 the chain is on the cytoplasmic side. Residues Ile-85–Thr-106 traverse the membrane as a helical segment. The Extracellular portion of the chain corresponds to Asp-107–Lys-121. Residues Cys-120 and Cys-197 are joined by a disulfide bond. A helical transmembrane segment spans residues Thr-122–Val-143. Topologically, residues Asp-144–Ser-162 are cytoplasmic. Residues Lys-163–Met-185 traverse the membrane as a helical segment. Over Gly-186–Trp-208 the chain is Extracellular. A helical transmembrane segment spans residues Gly-209 to Ser-233. Topologically, residues Leu-234–Leu-261 are cytoplasmic. Residues Val-262–Val-282 traverse the membrane as a helical segment. The Extracellular portion of the chain corresponds to Gln-283 to Ile-297. A helical transmembrane segment spans residues Leu-298 to Leu-319. At Asp-320 to Ala-367 the chain is on the cytoplasmic side. A lipid anchor (S-palmitoyl cysteine) is attached at Cys-331.

The protein belongs to the G-protein coupled receptor 1 family. Phosphorylation at Ser-360 requires GRK3. In terms of tissue distribution, in the brain, isoform KOR3 and isoform KOR3C are most abundant in hypothalamus and periaqueductal gray. Isoform KOR3A is highly expressed in cortex, striatum and brainstem. Isoform KOR3D is highly expressed in cerebellum, hypothalamus and brainstem. Detected in spleen lymphocytes.

The protein localises to the cell membrane. It localises to the cytoplasmic vesicle. Functionally, G-protein coupled opioid receptor that functions as a receptor for the endogenous neuropeptide nociceptin. Ligand binding causes a conformation change that triggers signaling via guanine nucleotide-binding proteins (G proteins) and modulates the activity of down-stream effectors. Signaling via G proteins mediates inhibition of adenylate cyclase activity and calcium channel activity. Arrestins modulate signaling via G proteins and mediate the activation of alternative signaling pathways that lead to the activation of MAP kinases. Plays a role in modulating nociception and the perception of pain. Plays a role in the regulation of locomotor activity by the neuropeptide nociceptin. The protein is Nociceptin receptor (Oprl1) of Mus musculus (Mouse).